Consider the following 180-residue polypeptide: Adenine phosphoribosyltransferase (180 aa).

It belongs to the purine/pyrimidine phosphoribosyltransferase family. In terms of assembly, homodimer.

Its subcellular location is the cytoplasm. The enzyme catalyses AMP + diphosphate = 5-phospho-alpha-D-ribose 1-diphosphate + adenine. It participates in purine metabolism; AMP biosynthesis via salvage pathway; AMP from adenine: step 1/1. Its function is as follows. Catalyzes a salvage reaction resulting in the formation of AMP, that is energically less costly than de novo synthesis. In Agrobacterium fabrum (strain C58 / ATCC 33970) (Agrobacterium tumefaciens (strain C58)), this protein is Adenine phosphoribosyltransferase.